We begin with the raw amino-acid sequence, 335 residues long: DNA-directed RNA polymerase subunit alpha (335 aa).

Residues 1 to 233 (MTRTANEFLT…QQIAIFVDLQ (233 aa)) form an alpha N-terminal domain (alpha-NTD) region. Positions 247 to 335 (VDPILLRPVD…MDDRFAYRSR (89 aa)) are alpha C-terminal domain (alpha-CTD).

This sequence belongs to the RNA polymerase alpha chain family. In terms of assembly, homodimer. The RNAP catalytic core consists of 2 alpha, 1 beta, 1 beta' and 1 omega subunit. When a sigma factor is associated with the core the holoenzyme is formed, which can initiate transcription.

It carries out the reaction RNA(n) + a ribonucleoside 5'-triphosphate = RNA(n+1) + diphosphate. Functionally, DNA-dependent RNA polymerase catalyzes the transcription of DNA into RNA using the four ribonucleoside triphosphates as substrates. This Acinetobacter baumannii (strain AB307-0294) protein is DNA-directed RNA polymerase subunit alpha.